The sequence spans 391 residues: Anhydro-N-acetylmuramic acid kinase (391 aa).

Residue 9 to 16 (GTSYDAVE) coordinates ATP.

It belongs to the anhydro-N-acetylmuramic acid kinase family.

It carries out the reaction 1,6-anhydro-N-acetyl-beta-muramate + ATP + H2O = N-acetyl-D-muramate 6-phosphate + ADP + H(+). Its pathway is amino-sugar metabolism; 1,6-anhydro-N-acetylmuramate degradation. It functions in the pathway cell wall biogenesis; peptidoglycan recycling. Functionally, catalyzes the specific phosphorylation of 1,6-anhydro-N-acetylmuramic acid (anhMurNAc) with the simultaneous cleavage of the 1,6-anhydro ring, generating MurNAc-6-P. Is required for the utilization of anhMurNAc either imported from the medium or derived from its own cell wall murein, and thus plays a role in cell wall recycling. The chain is Anhydro-N-acetylmuramic acid kinase from Streptomyces coelicolor (strain ATCC BAA-471 / A3(2) / M145).